The primary structure comprises 340 residues: MDETGNPTIPPASNNTCYDSIDDFRNQVYSTLYSMISVVGFFGNGFVLYVLVKTYHEKSAFQVYMINLAVADLLCVCTLPLRVAYYVHKGIWLFGDFLCRLSTYALYVNLYCSIFFMTAMSFFRCVAIVFPVQNISLVTQKKARLVCIAIWMFVILTSSPFLMANTYKDEKNNTKCFEPPQDNQAKNYVLILHYVSLFIGFIIPFITIIVCYTMIIFTLLKSSMKKNLSSRKRAIGMIIVVTAAFLVSFMPYHIQRTIHLHFLHNKTKPCDSILRMQKSVVITLSLAASNCCFDPLLYFFSGGNFRRRLSTIRKYSLSSMTYIPKKKTSLPQKGKDICKE.

Topologically, residues 1-31 are extracellular; sequence MDETGNPTIPPASNNTCYDSIDDFRNQVYST. Residue N14 is glycosylated (N-linked (GlcNAc...) asparagine). Residues 32-52 traverse the membrane as a helical segment; that stretch reads LYSMISVVGFFGNGFVLYVLV. Over 53 to 60 the chain is Cytoplasmic; the sequence is KTYHEKSA. A helical transmembrane segment spans residues 61 to 81; it reads FQVYMINLAVADLLCVCTLPL. The Extracellular segment spans residues 82 to 109; the sequence is RVAYYVHKGIWLFGDFLCRLSTYALYVN. A disulfide bridge connects residues C99 and C176. The helical transmembrane segment at 110–130 threads the bilayer; it reads LYCSIFFMTAMSFFRCVAIVF. The Cytoplasmic portion of the chain corresponds to 131–144; sequence PVQNISLVTQKKAR. The chain crosses the membrane as a helical span at residues 145–165; it reads LVCIAIWMFVILTSSPFLMAN. The Extracellular portion of the chain corresponds to 166 to 196; sequence TYKDEKNNTKCFEPPQDNQAKNYVLILHYVS. An N-linked (GlcNAc...) asparagine glycan is attached at N172. The chain crosses the membrane as a helical span at residues 197-217; sequence LFIGFIIPFITIIVCYTMIIF. At 218–233 the chain is on the cytoplasmic side; sequence TLLKSSMKKNLSSRKR. The chain crosses the membrane as a helical span at residues 234–254; sequence AIGMIIVVTAAFLVSFMPYHI. The Extracellular segment spans residues 255–279; the sequence is QRTIHLHFLHNKTKPCDSILRMQKS. N265 carries N-linked (GlcNAc...) asparagine glycosylation. Residues 280–300 form a helical membrane-spanning segment; the sequence is VVITLSLAASNCCFDPLLYFF. Residues 301–340 are Cytoplasmic-facing; sequence SGGNFRRRLSTIRKYSLSSMTYIPKKKTSLPQKGKDICKE.

This sequence belongs to the G-protein coupled receptor 1 family.

The protein resides in the cell membrane. Its function is as follows. Receptor for cysteinyl leukotrienes mediating bronchoconstriction of individuals with and without asthma. Stimulation by LTD4 results in the contraction and proliferation of smooth muscle, edema, eosinophil migration and damage to the mucus layer in the lung. This response is mediated via a G-protein that activates a phosphatidylinositol-calcium second messenger system. The chain is Cysteinyl leukotriene receptor 1 (CYSLTR1) from Cavia porcellus (Guinea pig).